Consider the following 269-residue polypeptide: Hydroxyethylthiazole kinase (269 aa).

Met-42 is a substrate binding site. 2 residues coordinate ATP: Arg-118 and Ser-164. Position 191 (Gly-191) interacts with substrate.

The protein belongs to the Thz kinase family. The cofactor is Mg(2+).

It catalyses the reaction 5-(2-hydroxyethyl)-4-methylthiazole + ATP = 4-methyl-5-(2-phosphooxyethyl)-thiazole + ADP + H(+). Its pathway is cofactor biosynthesis; thiamine diphosphate biosynthesis; 4-methyl-5-(2-phosphoethyl)-thiazole from 5-(2-hydroxyethyl)-4-methylthiazole: step 1/1. In terms of biological role, catalyzes the phosphorylation of the hydroxyl group of 4-methyl-5-beta-hydroxyethylthiazole (THZ). This Listeria monocytogenes serovar 1/2a (strain ATCC BAA-679 / EGD-e) protein is Hydroxyethylthiazole kinase.